Here is a 447-residue protein sequence, read N- to C-terminus: Imidazolonepropionase (447 aa).

The Fe(3+) site is built by His85 and His87. Zn(2+) contacts are provided by His85 and His87. Residues Arg94, Tyr157, and His190 each coordinate 4-imidazolone-5-propanoate. An N-formimidoyl-L-glutamate-binding site is contributed by Tyr157. His255 serves as a coordination point for Fe(3+). His255 contributes to the Zn(2+) binding site. Glu258 provides a ligand contact to 4-imidazolone-5-propanoate. Fe(3+) is bound at residue Asp329. Asp329 contacts Zn(2+). The N-formimidoyl-L-glutamate site is built by Asn331 and Gly333. A 4-imidazolone-5-propanoate-binding site is contributed by Ser334.

Belongs to the metallo-dependent hydrolases superfamily. HutI family. The cofactor is Zn(2+). Requires Fe(3+) as cofactor.

It is found in the cytoplasm. It carries out the reaction 4-imidazolone-5-propanoate + H2O = N-formimidoyl-L-glutamate. It functions in the pathway amino-acid degradation; L-histidine degradation into L-glutamate; N-formimidoyl-L-glutamate from L-histidine: step 3/3. In terms of biological role, catalyzes the hydrolytic cleavage of the carbon-nitrogen bond in imidazolone-5-propanoate to yield N-formimidoyl-L-glutamate. It is the third step in the universal histidine degradation pathway. This is Imidazolonepropionase from Shouchella clausii (strain KSM-K16) (Alkalihalobacillus clausii).